Here is a 178-residue protein sequence, read N- to C-terminus: N-alpha-acetyltransferase 20 (178 aa).

An N-acetyltransferase domain is found at 2–157 (TSLRPFTCDD…DAYDMRKALS (156 aa)). Residues 159 to 178 (DTEKKSIVPLPHPVRPEDIE) form a disordered region.

This sequence belongs to the acetyltransferase family. ARD1 subfamily. As to quaternary structure, component of the N-terminal acetyltransferase B (NatB) complex which is composed of naa20 and naa25.

The protein resides in the cytoplasm. It is found in the nucleus. The catalysed reaction is N-terminal L-methionyl-L-asparaginyl-[protein] + acetyl-CoA = N-terminal N(alpha)-acetyl-L-methionyl-L-asparaginyl-[protein] + CoA + H(+). The enzyme catalyses N-terminal L-methionyl-L-glutaminyl-[protein] + acetyl-CoA = N-terminal N(alpha)-acetyl-L-methionyl-L-glutaminyl-[protein] + CoA + H(+). It catalyses the reaction N-terminal L-methionyl-L-aspartyl-[protein] + acetyl-CoA = N-terminal N(alpha)-acetyl-L-methionyl-L-aspartyl-[protein] + CoA + H(+). It carries out the reaction N-terminal L-methionyl-L-glutamyl-[protein] + acetyl-CoA = N-terminal N(alpha)-acetyl-L-methionyl-L-glutamyl-[protein] + CoA + H(+). In terms of biological role, catalytic subunit of the NatB complex which catalyzes acetylation of the N-terminal methionine residues of peptides beginning with Met-Asp, Met-Glu, Met-Asn and Met-Gln. Proteins with cell cycle functions are overrepresented in the pool of NatB substrates. Required for maintaining the structure and function of actomyosin fibers and for proper cellular migration. The chain is N-alpha-acetyltransferase 20 (naa20) from Xenopus tropicalis (Western clawed frog).